The primary structure comprises 443 residues: Light-independent protochlorophyllide reductase subunit N (443 aa).

[4Fe-4S] cluster-binding residues include Cys-15, Cys-40, and Cys-99.

Belongs to the BchN/ChlN family. In terms of assembly, protochlorophyllide reductase is composed of three subunits; BchL, BchN and BchB. Forms a heterotetramer of two BchB and two BchN subunits. It depends on [4Fe-4S] cluster as a cofactor.

The catalysed reaction is chlorophyllide a + oxidized 2[4Fe-4S]-[ferredoxin] + 2 ADP + 2 phosphate = protochlorophyllide a + reduced 2[4Fe-4S]-[ferredoxin] + 2 ATP + 2 H2O. It participates in porphyrin-containing compound metabolism; bacteriochlorophyll biosynthesis (light-independent). Functionally, component of the dark-operative protochlorophyllide reductase (DPOR) that uses Mg-ATP and reduced ferredoxin to reduce ring D of protochlorophyllide (Pchlide) to form chlorophyllide a (Chlide). This reaction is light-independent. The NB-protein (BchN-BchB) is the catalytic component of the complex. This Heliobacterium modesticaldum (strain ATCC 51547 / Ice1) protein is Light-independent protochlorophyllide reductase subunit N.